The following is a 379-amino-acid chain: Polycomb group protein FIE2 (379 aa).

WD repeat units follow at residues 85 to 128, 131 to 171, 177 to 217, 243 to 280, 292 to 333, and 340 to 378; these read DKDE…LAKS, GHGD…CILI, GHRN…LYVD, VHSN…QSPG, VPEC…PVLI, and QCKS…PSSR.

It belongs to the WD repeat ESC family. In terms of tissue distribution, widely expressed. Expressed in the embryo sac before pollination. After pollination, its expression persists, predominantly in the embryo and at lower levels in the endosperm.

The protein localises to the nucleus. Its function is as follows. Polycomb group (PcG) protein. PcG proteins act by forming multiprotein complexes, which are required to maintain the transcriptionally repressive state of homeotic genes throughout development. PcG proteins are not required to initiate repression, but to maintain it during later stages of development. They probably act via the methylation of histones, rendering chromatin heritably changed in its expressibility. The polypeptide is Polycomb group protein FIE2 (FIE2) (Zea mays (Maize)).